A 309-amino-acid polypeptide reads, in one-letter code: Elongation factor Ts (309 aa).

Positions 82–85 are involved in Mg(2+) ion dislocation from EF-Tu; sequence TDFV.

Belongs to the EF-Ts family.

The protein resides in the cytoplasm. In terms of biological role, associates with the EF-Tu.GDP complex and induces the exchange of GDP to GTP. It remains bound to the aminoacyl-tRNA.EF-Tu.GTP complex up to the GTP hydrolysis stage on the ribosome. The chain is Elongation factor Ts from Rickettsia felis (strain ATCC VR-1525 / URRWXCal2) (Rickettsia azadi).